A 475-amino-acid polypeptide reads, in one-letter code: Actin-related protein 10 (475 aa).

It belongs to the actin family.

The protein resides in the cytoplasm. The protein localises to the cytoskeleton. The chain is Actin-related protein 10 from Dictyostelium discoideum (Social amoeba).